The sequence spans 290 residues: NAD kinase (290 aa).

Residue D73 is the Proton acceptor of the active site. NAD(+) is bound by residues 73 to 74, 147 to 148, R158, R175, D177, 188 to 193, and Q246; these read DG, ND, and TAYALS.

It belongs to the NAD kinase family. Requires a divalent metal cation as cofactor.

It is found in the cytoplasm. The enzyme catalyses NAD(+) + ATP = ADP + NADP(+) + H(+). In terms of biological role, involved in the regulation of the intracellular balance of NAD and NADP, and is a key enzyme in the biosynthesis of NADP. Catalyzes specifically the phosphorylation on 2'-hydroxyl of the adenosine moiety of NAD to yield NADP. In Thiobacillus denitrificans (strain ATCC 25259 / T1), this protein is NAD kinase.